The sequence spans 92 residues: Probable Fe(2+)-trafficking protein (92 aa).

It belongs to the Fe(2+)-trafficking protein family.

Could be a mediator in iron transactions between iron acquisition and iron-requiring processes, such as synthesis and/or repair of Fe-S clusters in biosynthetic enzymes. In Shewanella sp. (strain ANA-3), this protein is Probable Fe(2+)-trafficking protein.